Consider the following 202-residue polypeptide: Peptidyl-tRNA hydrolase (202 aa).

Y14 contacts tRNA. Residue H19 is the Proton acceptor of the active site. TRNA contacts are provided by F64, N66, and N112.

This sequence belongs to the PTH family. In terms of assembly, monomer.

It localises to the cytoplasm. It catalyses the reaction an N-acyl-L-alpha-aminoacyl-tRNA + H2O = an N-acyl-L-amino acid + a tRNA + H(+). Hydrolyzes ribosome-free peptidyl-tRNAs (with 1 or more amino acids incorporated), which drop off the ribosome during protein synthesis, or as a result of ribosome stalling. In terms of biological role, catalyzes the release of premature peptidyl moieties from peptidyl-tRNA molecules trapped in stalled 50S ribosomal subunits, and thus maintains levels of free tRNAs and 50S ribosomes. In Methylobacterium radiotolerans (strain ATCC 27329 / DSM 1819 / JCM 2831 / NBRC 15690 / NCIMB 10815 / 0-1), this protein is Peptidyl-tRNA hydrolase.